A 98-amino-acid chain; its full sequence is Small ribosomal subunit protein eS24 (98 aa).

This sequence belongs to the eukaryotic ribosomal protein eS24 family.

This chain is Small ribosomal subunit protein eS24, found in Thermococcus gammatolerans (strain DSM 15229 / JCM 11827 / EJ3).